A 195-amino-acid polypeptide reads, in one-letter code: AP-4-A phosphorylase (195 aa).

Residues 1–17 (MSDEDRTDRATEDHTIF) show a composition bias toward basic and acidic residues. A disordered region spans residues 1 to 20 (MSDEDRTDRATEDHTIFDRG). Residues 57–166 (PFTEIPQLSD…VPRWGGDANF (110 aa)) enclose the HIT domain. The Histidine triad motif signature appears at 151 to 155 (HLHVH). His153 serves as the catalytic Tele-AMP-histidine intermediate.

Homotetramer. The cofactor is a divalent metal cation.

The catalysed reaction is ADP + ATP + H(+) = P(1),P(4)-bis(5'-adenosyl) tetraphosphate + phosphate. Catabolizes diadenosine 5',5'''-P1,P4-tetraphosphate (Ap4A) into ADP and ATP. This chain is AP-4-A phosphorylase, found in Mycobacterium tuberculosis (strain CDC 1551 / Oshkosh).